A 133-amino-acid polypeptide reads, in one-letter code: Large ribosomal subunit protein bL17 (133 aa).

Belongs to the bacterial ribosomal protein bL17 family. In terms of assembly, part of the 50S ribosomal subunit. Contacts protein L32.

The protein is Large ribosomal subunit protein bL17 of Nitratidesulfovibrio vulgaris (strain ATCC 29579 / DSM 644 / CCUG 34227 / NCIMB 8303 / VKM B-1760 / Hildenborough) (Desulfovibrio vulgaris).